The chain runs to 274 residues: GCN5-related N-acetyltransferase 7, chloroplastic (274 aa).

The N-terminal 65 residues, 1–65 (MAFLCSSLPS…STFVISESVS (65 aa)), are a transit peptide targeting the chloroplast. The 193-residue stretch at 75–267 (LRVRTFNELN…QRLLLWLALP (193 aa)) folds into the N-acetyltransferase domain. Residues 189–191 (VCV), 197–202 (RNGVGY), 228–230 (NEA), and Tyr235 each bind acetyl-CoA. Catalysis depends on Tyr235, which acts as the Proton donor.

Belongs to the acetyltransferase family. GNAT subfamily. In terms of assembly, oligomer. Post-translationally, autoacetylated. Expressed in green tissues.

It is found in the plastid. Its subcellular location is the chloroplast. The enzyme catalyses an N-terminal L-alpha-aminoacyl-[protein] + acetyl-CoA = N-terminal N(alpha)-acetyl-L-alpha-aminoacyl-[protein] + CoA + H(+). It carries out the reaction L-lysyl-[protein] + acetyl-CoA = N(6)-acetyl-L-lysyl-[protein] + CoA + H(+). It catalyses the reaction N-terminal L-alanyl-[protein] + acetyl-CoA = N-terminal N(alpha)-acetyl-L-alanyl-[protein] + CoA + H(+). The catalysed reaction is N-terminal L-seryl-[protein] + acetyl-CoA = N-terminal N(alpha)-acetyl-L-seryl-[protein] + CoA + H(+). The enzyme catalyses N-terminal L-threonyl-[protein] + acetyl-CoA = N-terminal N(alpha)-acetyl-L-threonyl-[protein] + CoA + H(+). It carries out the reaction N-terminal L-methionyl-[protein] + acetyl-CoA = N-terminal N(alpha)-acetyl-L-methionyl-[protein] + CoA + H(+). It catalyses the reaction N-terminal L-prolyl-[protein] + acetyl-CoA = N-terminal N(alpha)-acetyl-L-prolyl-[protein] + CoA + H(+). The catalysed reaction is N-terminal L-valyl-[protein] + acetyl-CoA = N-terminal N(alpha)-acetyl-L-valyl-[protein] + CoA + H(+). Protein acetyltransferase with dual specificity triggering both N-alpha-acetylation (NTA), with a large spectrum of modified N-termini, including methionine, alanine, serine, threonine and to a lower extent valine and proline as substrates, and epsilon-lysine acetylation (KA). The polypeptide is GCN5-related N-acetyltransferase 7, chloroplastic (Arabidopsis thaliana (Mouse-ear cress)).